The chain runs to 194 residues: Segregation and condensation protein B (194 aa).

The protein belongs to the ScpB family. Homodimer. Homodimerization may be required to stabilize the binding of ScpA to the Smc head domains. Component of a cohesin-like complex composed of ScpA, ScpB and the Smc homodimer, in which ScpA and ScpB bind to the head domain of Smc. The presence of the three proteins is required for the association of the complex with DNA.

The protein resides in the cytoplasm. In terms of biological role, participates in chromosomal partition during cell division. May act via the formation of a condensin-like complex containing Smc and ScpA that pull DNA away from mid-cell into both cell halves. The protein is Segregation and condensation protein B of Streptococcus agalactiae serotype Ia (strain ATCC 27591 / A909 / CDC SS700).